Consider the following 723-residue polypeptide: LPS-assembly protein LptD (723 aa).

An N-terminal signal peptide occupies residues 1 to 23 (MNTLKLCLILYACLVLLPVRVMS).

It belongs to the LptD family. As to quaternary structure, component of the lipopolysaccharide transport and assembly complex. Interacts with LptE and LptA.

The protein resides in the cell outer membrane. Functionally, together with LptE, is involved in the assembly of lipopolysaccharide (LPS) at the surface of the outer membrane. The polypeptide is LPS-assembly protein LptD (Nitrosomonas europaea (strain ATCC 19718 / CIP 103999 / KCTC 2705 / NBRC 14298)).